The sequence spans 371 residues: MAQIDFSAEIRALRATYSSIENVSNVEELKEDIAELSERAGEPNLWDDPAAAQKITSRLSHRQSELERLNTLVSRIDDLEVLVELGQDEDDADSMGEAAAELESIRKSLKDLEVVTLLSGEFDEREAVVTIRAGAGGVDAADFAEMLLRMYLRWAERHGYPTTIMDTSYAEEAGLKSATFEVNAPYAYGTLSVEAGTHRLVRISPFDNQGRRQTSFAAVEVIPLIEQTDSIDIPDNEIRVDVFRSSGPGGQSVNTTDSAVRLTHIPTGTVVSMQNEKSQLQNRAAALRVLQSRLLLLKKEQEDAEKKAFAGDVKASWGDQMRSYVLNPYQMVKDLRTEHEVGNTSAVFDGEIDDFIDAGIRWRTDNRNAAN.

Position 251 is an N5-methylglutamine (Q251).

Belongs to the prokaryotic/mitochondrial release factor family. In terms of processing, methylated by PrmC. Methylation increases the termination efficiency of RF2.

It localises to the cytoplasm. Its function is as follows. Peptide chain release factor 2 directs the termination of translation in response to the peptide chain termination codons UGA and UAA. This chain is Peptide chain release factor 2, found in Arthrobacter sp. (strain FB24).